The sequence spans 266 residues: MQGNTRRTGVMTDVHRRFLQLLMTHGVLEECDVKRLQKHCYKVHDCNATVEKLEDFINTINSVLESLYIEIKKGVTEDDGRPIYALVNLATTSVSKMASDFAENELDLFRKALELIIDSDTGFASSTNILNLVDQLKGKKMRKKEAEHVLQKFVQNKWLIEKEGEFTLHGRAILEMDQYIRETYPDAVKVCNICRSLLIQGQSCETCGIRMHLPCVAKYFQSSSEPHCPHCNDYWPHEVPEVFDPEKERETGMSRSNKRPSRSRQH.

The interval 1-102 (MQGNTRRTGV…SVSKMASDFA (102 aa)) is interaction with NSMCE3. Residues 191 to 232 (CNICRSLLIQGQSCETCGIRMHLPCVAKYFQSSSEPHCPHCN) form an RING-type; atypical zinc finger. Positions 243–252 (FDPEKERETG) are enriched in basic and acidic residues. The tract at residues 243–266 (FDPEKERETGMSRSNKRPSRSRQH) is disordered. Residues 256–266 (SNKRPSRSRQH) are compositionally biased toward basic residues.

It belongs to the NSE1 family. In terms of assembly, component of the SMC5-SMC6 complex which consists at least of SMC5, SMC6, NSMCE2, NSMCE1, NSMCE4A or EID3 and NSMCE3. NSMCE1, NSMCE4A or EID3 and NSMCE3 probably form a subcomplex that bridges the head domains of the SMC5-SMC6 heterodimer. Interacts with NSMCE3. In terms of processing, ubiquitinated.

The protein resides in the nucleus. It localises to the chromosome. The protein localises to the telomere. The enzyme catalyses S-ubiquitinyl-[E2 ubiquitin-conjugating enzyme]-L-cysteine + [acceptor protein]-L-lysine = [E2 ubiquitin-conjugating enzyme]-L-cysteine + N(6)-ubiquitinyl-[acceptor protein]-L-lysine.. Functionally, RING-type zinc finger-containing E3 ubiquitin ligase that assembles with melanoma antigen protein (MAGE) to catalyze the direct transfer of ubiquitin from E2 ubiquitin-conjugating enzyme to a specific substrate. Within MAGE-RING ubiquitin ligase complex, MAGE stimulates and specifies ubiquitin ligase activity likely through recruitment and/or stabilization of the E2 ubiquitin-conjugating enzyme at the E3:substrate complex. Involved in maintenance of genome integrity, DNA damage response and DNA repair. NSMCE3/MAGEG1 and NSMCE1 ubiquitin ligase are components of SMC5-SMC6 complex and may positively regulate homologous recombination-mediated DNA repair. This is Non-structural maintenance of chromosomes element 1 homolog (NSMCE1) from Bos taurus (Bovine).